The following is a 248-amino-acid chain: NADP-dependent 3-hydroxy acid dehydrogenase YdfG (248 aa).

NADP(+) contacts are provided by residues 7 to 12 (GATAGF), 32 to 33 (RR), 54 to 55 (DV), and Asn-81. Ser-134 lines the substrate pocket. NADP(+) contacts are provided by residues Tyr-147, Lys-151, and 177 to 185 (PGLVGGTEF). Residue Tyr-147 is the Proton acceptor of the active site.

Belongs to the short-chain dehydrogenases/reductases (SDR) family. As to quaternary structure, homotetramer.

The catalysed reaction is 3-hydroxypropanoate + NADP(+) = 3-oxopropanoate + NADPH + H(+). It carries out the reaction L-allo-threonine + NADP(+) = aminoacetone + CO2 + NADPH. NADP-dependent dehydrogenase with broad substrate specificity acting on 3-hydroxy acids. Catalyzes the NADP-dependent oxidation of L-allo-threonine to L-2-amino-3-keto-butyrate, which is spontaneously decarboxylated into aminoacetone. Also acts on D-threonine, L-serine, D-serine, D-3-hydroxyisobutyrate, L-3-hydroxyisobutyrate, D-glycerate and L-glycerate. Able to catalyze the reduction of the malonic semialdehyde to 3-hydroxypropionic acid. YdfG is apparently supplementing RutE, the presumed malonic semialdehyde reductase involved in pyrimidine degradation since both are able to detoxify malonic semialdehyde. The sequence is that of NADP-dependent 3-hydroxy acid dehydrogenase YdfG from Salmonella typhi.